Reading from the N-terminus, the 427-residue chain is MESLTLQPIARVDGAINLPGSKSVSNRALLLAALACGKTVLTNLLDSDDVRHMLNALSALGINYTLSADRTRCDITGNGGALRAPGALELFLGNAGTAMRPLAAALCLGQNEIVLTGEPRMKERPIGHLVDSLRQGGANIDYLEQENYPPLRLRGGFTGGDIEVDGSVSSQFLTALLMTAPLAPKDTIIRVKGELVSKPYIDITLNLMKTFGVEIANHHYQQFVVKGGQQYHSPGRYLVEGDASSASYFLAAGAIKGGTVKVTGIGRKSMQGDIRFADVLEKMGATITWGDDFIACTRGELHAIDMDMNHIPDAAMTIATTALFAKGTTTLRNIYNWRVKETDRLFAMATELRKVGAEVEEGHDYIRITPPAKLQHADIGTYNDHRMAMCFSLVALSDTPVTILDPKCTAKTFPDYFEQLARMSTPA.

3-phosphoshikimate is bound by residues lysine 22, serine 23, and arginine 27. Lysine 22 is a binding site for phosphoenolpyruvate. Residues glycine 96 and arginine 124 each coordinate phosphoenolpyruvate. Residues serine 169, serine 170, glutamine 171, serine 197, aspartate 313, asparagine 336, and lysine 340 each coordinate 3-phosphoshikimate. Glutamine 171 is a phosphoenolpyruvate binding site. Aspartate 313 functions as the Proton acceptor in the catalytic mechanism. The phosphoenolpyruvate site is built by arginine 344, arginine 386, and lysine 411.

The protein belongs to the EPSP synthase family. Monomer.

Its subcellular location is the cytoplasm. It catalyses the reaction 3-phosphoshikimate + phosphoenolpyruvate = 5-O-(1-carboxyvinyl)-3-phosphoshikimate + phosphate. Its pathway is metabolic intermediate biosynthesis; chorismate biosynthesis; chorismate from D-erythrose 4-phosphate and phosphoenolpyruvate: step 6/7. Its function is as follows. Catalyzes the transfer of the enolpyruvyl moiety of phosphoenolpyruvate (PEP) to the 5-hydroxyl of shikimate-3-phosphate (S3P) to produce enolpyruvyl shikimate-3-phosphate and inorganic phosphate. In Salmonella choleraesuis (strain SC-B67), this protein is 3-phosphoshikimate 1-carboxyvinyltransferase.